Consider the following 81-residue polypeptide: ATP synthase subunit c (81 aa).

The next 2 membrane-spanning stretches (helical) occupy residues 7–27 and 55–75; these read LVAI…AIGF and IAGL…FFIF.

The protein belongs to the ATPase C chain family. As to quaternary structure, F-type ATPases have 2 components, F(1) - the catalytic core - and F(0) - the membrane proton channel. F(1) has five subunits: alpha(3), beta(3), gamma(1), delta(1), epsilon(1). F(0) has three main subunits: a(1), b(2) and c(10-14). The alpha and beta chains form an alternating ring which encloses part of the gamma chain. F(1) is attached to F(0) by a central stalk formed by the gamma and epsilon chains, while a peripheral stalk is formed by the delta and b chains.

Its subcellular location is the cell inner membrane. Its function is as follows. F(1)F(0) ATP synthase produces ATP from ADP in the presence of a proton or sodium gradient. F-type ATPases consist of two structural domains, F(1) containing the extramembraneous catalytic core and F(0) containing the membrane proton channel, linked together by a central stalk and a peripheral stalk. During catalysis, ATP synthesis in the catalytic domain of F(1) is coupled via a rotary mechanism of the central stalk subunits to proton translocation. In terms of biological role, key component of the F(0) channel; it plays a direct role in translocation across the membrane. A homomeric c-ring of between 10-14 subunits forms the central stalk rotor element with the F(1) delta and epsilon subunits. This is ATP synthase subunit c from Acinetobacter baumannii (strain ACICU).